The following is a 596-amino-acid chain: V-type ATP synthase alpha chain (596 aa).

233 to 240 (GPFGAGKT) lines the ATP pocket.

This sequence belongs to the ATPase alpha/beta chains family.

It carries out the reaction ATP + H2O + 4 H(+)(in) = ADP + phosphate + 5 H(+)(out). Functionally, produces ATP from ADP in the presence of a proton gradient across the membrane. The V-type alpha chain is a catalytic subunit. This Streptococcus sanguinis (strain SK36) protein is V-type ATP synthase alpha chain.